A 547-amino-acid chain; its full sequence is Chaperonin GroEL (547 aa).

ATP-binding positions include 30–33 (TLGP), Lys51, 87–91 (DGTTT), Gly415, 479–481 (NAA), and Asp495. Residues 526–547 (KKDEPTPPAAGGGMGGMGGMDF) are disordered. Gly residues predominate over residues 535–547 (AGGGMGGMGGMDF).

It belongs to the chaperonin (HSP60) family. In terms of assembly, forms a cylinder of 14 subunits composed of two heptameric rings stacked back-to-back. Interacts with the co-chaperonin GroES.

The protein resides in the cytoplasm. The catalysed reaction is ATP + H2O + a folded polypeptide = ADP + phosphate + an unfolded polypeptide.. In terms of biological role, together with its co-chaperonin GroES, plays an essential role in assisting protein folding. The GroEL-GroES system forms a nano-cage that allows encapsulation of the non-native substrate proteins and provides a physical environment optimized to promote and accelerate protein folding. The chain is Chaperonin GroEL from Xylella fastidiosa (strain M12).